The sequence spans 317 residues: Acetyl-coenzyme A carboxylase carboxyl transferase subunit alpha (317 aa).

The CoA carboxyltransferase C-terminal domain maps to 41-291; that stretch reads KVDKLLRSTY…SMALDSALRD (251 aa).

Belongs to the AccA family. Acetyl-CoA carboxylase is a heterohexamer composed of biotin carboxyl carrier protein (AccB), biotin carboxylase (AccC) and two subunits each of ACCase subunit alpha (AccA) and ACCase subunit beta (AccD).

The protein localises to the cytoplasm. The enzyme catalyses N(6)-carboxybiotinyl-L-lysyl-[protein] + acetyl-CoA = N(6)-biotinyl-L-lysyl-[protein] + malonyl-CoA. The protein operates within lipid metabolism; malonyl-CoA biosynthesis; malonyl-CoA from acetyl-CoA: step 1/1. Functionally, component of the acetyl coenzyme A carboxylase (ACC) complex. First, biotin carboxylase catalyzes the carboxylation of biotin on its carrier protein (BCCP) and then the CO(2) group is transferred by the carboxyltransferase to acetyl-CoA to form malonyl-CoA. This Paramagnetospirillum magneticum (strain ATCC 700264 / AMB-1) (Magnetospirillum magneticum) protein is Acetyl-coenzyme A carboxylase carboxyl transferase subunit alpha.